The primary structure comprises 413 residues: Alpha-ketoglutarate-dependent xanthine dioxygenase xan1 (413 aa).

Residues 1 to 18 (MSATATTTVVEPPTTTLT) are compositionally biased toward low complexity. The segment at 1 to 24 (MSATATTTVVEPPTTTLTGATEPP) is disordered. Residues histidine 183 and aspartate 185 each coordinate Fe cation. 2 residues coordinate 2-oxoglutarate: threonine 228 and tryptophan 362. Histidine 377 serves as a coordination point for Fe cation. Arginine 389 lines the 2-oxoglutarate pocket.

Belongs to the TfdA dioxygenase family. Fe(2+) is required as a cofactor.

Its subcellular location is the cytoplasm. The protein resides in the cytosol. It catalyses the reaction xanthine + 2-oxoglutarate + O2 = urate + succinate + CO2. In terms of biological role, alpha-ketoglutarate-dependent xanthine dioxygenase is a non-heme mononuclear Fe(2+) enzyme that decarboxylates alpha-ketoglutarate to succinate and CO(2) while hydroxylating xanthine to generate uric acid. Allows xanthine utilization as a nitrogen source. This Schizosaccharomyces pombe (strain 972 / ATCC 24843) (Fission yeast) protein is Alpha-ketoglutarate-dependent xanthine dioxygenase xan1 (xan1).